Reading from the N-terminus, the 410-residue chain is Scarecrow-like protein 32 (410 aa).

The 391-residue stretch at 18-408 (LRGCGDANFM…HSVVFATVWV (391 aa)) folds into the GRAS domain. The leucine repeat I (LRI) stretch occupies residues 25-88 (NFMEQLLLHC…AVSKTPTLSS (64 aa)). The interval 107–188 (LAAFVDLTPW…HFPPFINISY (82 aa)) is VHIID. Positions 138-142 (VHIVD) match the VHIID motif. The interval 190–227 (ELGSKLVNFATTRNITMEFTIVPSTYSDGFSSLLQQLR) is leucine repeat II (LRII). The segment at 237 to 329 (LVVNCHMMLR…EAEISWKIEN (93 aa)) is PFYRE. Residues 332–408 (AKEGAERVER…HSVVFATVWV (77 aa)) form an SAW region.

Belongs to the GRAS family. Expressed in seedlings, leaves and flowers.

Its subcellular location is the nucleus. In terms of biological role, probable transcription factor involved in plant development. The sequence is that of Scarecrow-like protein 32 (SCL32) from Arabidopsis thaliana (Mouse-ear cress).